We begin with the raw amino-acid sequence, 162 residues long: Endoribonuclease YbeY (162 aa).

Residues histidine 128, histidine 132, and histidine 138 each contribute to the Zn(2+) site.

This sequence belongs to the endoribonuclease YbeY family. It depends on Zn(2+) as a cofactor.

The protein localises to the cytoplasm. Single strand-specific metallo-endoribonuclease involved in late-stage 70S ribosome quality control and in maturation of the 3' terminus of the 16S rRNA. The protein is Endoribonuclease YbeY of Levilactobacillus brevis (strain ATCC 367 / BCRC 12310 / CIP 105137 / JCM 1170 / LMG 11437 / NCIMB 947 / NCTC 947) (Lactobacillus brevis).